The following is a 268-amino-acid chain: MYKDIKVDPAQLEAALDARLKIRAGFDKPTAGMAAGMTQVNMISVPRDWAYDFLLYAHRNPQSCPVLDVLEEGIYATKLAADSDIRTDFPRYRIWKDGEMVDEVTDAREIYNAHPDLVTFLIGCSFSFETALQEAGIEVRHIHDDTNVPMYLSNIKCEPAGRISGNMVVSMRPIPSHQISEAVKITARMPSVHGAPVHIGHPESLGIKDVNKPDFGDASRIEAGEIPVFWACGVTPQAAVINSKIPFAISHAPGYMFITDIPDRAWMG.

This sequence belongs to the D-glutamate cyclase family.

The chain is Putative hydro-lyase ABSDF2257 from Acinetobacter baumannii (strain SDF).